A 202-amino-acid polypeptide reads, in one-letter code: MVNYPHNPIRQKVTPLQKQQKHRQVDFANRGMSFEAAINATNAYYLAKGIAVIHKKPTPIQIVKVDYPRRSRAKIVEAYFKQASTTDYSGIYKGHYIDFEAKETRQKTAMPMKNFHAHQIEHMAAVLKQKGICFVLLHFATLKETYYLPAKALIDFYQIDRGNKSMPLDYIRKNGFEVKLGAFPQVPYLDIIEQKFLGGDYN.

Residues T85, D87, E100, and Q119 each coordinate Mg(2+).

Belongs to the RecU family. Requires Mg(2+) as cofactor.

It localises to the cytoplasm. The enzyme catalyses Endonucleolytic cleavage at a junction such as a reciprocal single-stranded crossover between two homologous DNA duplexes (Holliday junction).. Endonuclease that resolves Holliday junction intermediates in genetic recombination. Cleaves mobile four-strand junctions by introducing symmetrical nicks in paired strands. Promotes annealing of linear ssDNA with homologous dsDNA. Required for DNA repair, homologous recombination and chromosome segregation. This is Holliday junction resolvase RecU from Streptococcus equi subsp. zooepidemicus (strain MGCS10565).